The primary structure comprises 124 residues: MARLVGVDLPRDKRMEIALTYIYGVGRTRSNEILAATGIDRDLRTRDLTDDQLTHLRDYIEANLKVEGDLRREVQADIRRKIEIGCYQGLRHRRGLPVRGQRTKTNARTRKGPKRTIAGKKKAR.

The segment at 95–124 (GLPVRGQRTKTNARTRKGPKRTIAGKKKAR) is disordered.

Belongs to the universal ribosomal protein uS13 family. Part of the 30S ribosomal subunit. Forms a loose heterodimer with protein S19. Forms two bridges to the 50S subunit in the 70S ribosome.

In terms of biological role, located at the top of the head of the 30S subunit, it contacts several helices of the 16S rRNA. In the 70S ribosome it contacts the 23S rRNA (bridge B1a) and protein L5 of the 50S subunit (bridge B1b), connecting the 2 subunits; these bridges are implicated in subunit movement. Contacts the tRNAs in the A and P-sites. In Mycobacterium avium (strain 104), this protein is Small ribosomal subunit protein uS13.